The following is a 276-amino-acid chain: Glutamate racemase (276 aa).

Substrate-binding positions include 12–13 (DS) and 44–45 (YG). Cys-76 acts as the Proton donor/acceptor in catalysis. Substrate is bound at residue 77 to 78 (NT). Cys-187 serves as the catalytic Proton donor/acceptor. A substrate-binding site is contributed by 188–189 (TH).

The protein belongs to the aspartate/glutamate racemases family.

The catalysed reaction is L-glutamate = D-glutamate. The protein operates within cell wall biogenesis; peptidoglycan biosynthesis. Its function is as follows. Provides the (R)-glutamate required for cell wall biosynthesis. The chain is Glutamate racemase from Granulibacter bethesdensis (strain ATCC BAA-1260 / CGDNIH1).